Here is a 146-residue protein sequence, read N- to C-terminus: Large ribosomal subunit protein uL11 (146 aa).

Belongs to the universal ribosomal protein uL11 family. As to quaternary structure, part of the ribosomal stalk of the 50S ribosomal subunit. Interacts with L10 and the large rRNA to form the base of the stalk. L10 forms an elongated spine to which L12 dimers bind in a sequential fashion forming a multimeric L10(L12)X complex. In terms of processing, one or more lysine residues are methylated.

Its function is as follows. Forms part of the ribosomal stalk which helps the ribosome interact with GTP-bound translation factors. The polypeptide is Large ribosomal subunit protein uL11 (Corynebacterium jeikeium (strain K411)).